Reading from the N-terminus, the 370-residue chain is GMP synthase [glutamine-hydrolyzing] subunit B (370 aa).

One can recognise a GMPS ATP-PPase domain in the interval 3–189; sequence FDPQKFVDEI…LGLPRDIYNR (187 aa). 29–35 serves as a coordination point for ATP; the sequence is SGGVDST.

As to quaternary structure, heterodimer composed of a glutamine amidotransferase subunit (A) and a GMP-binding subunit (B).

The enzyme catalyses XMP + L-glutamine + ATP + H2O = GMP + L-glutamate + AMP + diphosphate + 2 H(+). It participates in purine metabolism; GMP biosynthesis; GMP from XMP (L-Gln route): step 1/1. Catalyzes the synthesis of GMP from XMP. The sequence is that of GMP synthase [glutamine-hydrolyzing] subunit B (guaAB) from Sulfurisphaera tokodaii (strain DSM 16993 / JCM 10545 / NBRC 100140 / 7) (Sulfolobus tokodaii).